The chain runs to 428 residues: Probable protein phosphatase 2C 12 (428 aa).

The 270-residue stretch at 24–293 folds into the PPM-type phosphatase domain; sequence KIDNPELIHG…DDTTCIVVDI (270 aa). Residues Asp69, Gly70, Asp245, and Asp284 each contribute to the Mn(2+) site. Residues 301 to 331 form a disordered region; the sequence is ASVPPPKKQGKGMLKSMFKRKTSDSSSNIEK.

It belongs to the PP2C family. The cofactor is Mg(2+). Requires Mn(2+) as cofactor.

It catalyses the reaction O-phospho-L-seryl-[protein] + H2O = L-seryl-[protein] + phosphate. The enzyme catalyses O-phospho-L-threonyl-[protein] + H2O = L-threonyl-[protein] + phosphate. This chain is Probable protein phosphatase 2C 12, found in Arabidopsis thaliana (Mouse-ear cress).